A 993-amino-acid chain; its full sequence is Chromosome transmission fidelity protein 18 homolog (993 aa).

The disordered stretch occupies residues 26 to 72 (PDEFNAYDGPSTSKQAAEKQKENRAPVAALRDSTRLGNSTLGSPQLS). The span at 60–72 (RLGNSTLGSPQLS) shows a compositional bias: polar residues. 427-434 (GPPGLGKT) contacts ATP. Positions 892–913 (AAPKGGAPSAPAAKKKTSGAAA) are disordered. Residues 894 to 913 (PKGGAPSAPAAKKKTSGAAA) show a composition bias toward low complexity.

The protein belongs to the activator 1 small subunits family. CTF18 subfamily. As to quaternary structure, component of the CTF18-RFC complex.

The protein resides in the nucleus. Functionally, chromosome cohesion factor involved in sister chromatid cohesion and fidelity of chromosome transmission. Component of one of the cell nuclear antigen loader complexes, CTF18-replication factor C (CTF18-RFC). The CTF18-RFC complex catalyzes the ATP-dependent loading of PCNA onto primed and gapped DNA and has weak ATPase activity. The CTF18-RFC complex catalyzes the ATP-dependent loading of PCNA onto primed and gapped DNA. In Drosophila melanogaster (Fruit fly), this protein is Chromosome transmission fidelity protein 18 homolog.